Here is a 373-residue protein sequence, read N- to C-terminus: UDP-3-O-acylglucosamine N-acyltransferase 2 (373 aa).

H239 (proton acceptor) is an active-site residue. The interval 345–373 is disordered; that stretch reads KTNGKSGQADAPPKVALECHGTTGDAPQG.

This sequence belongs to the transferase hexapeptide repeat family. LpxD subfamily. As to quaternary structure, homotrimer.

It catalyses the reaction a UDP-3-O-[(3R)-3-hydroxyacyl]-alpha-D-glucosamine + a (3R)-hydroxyacyl-[ACP] = a UDP-2-N,3-O-bis[(3R)-3-hydroxyacyl]-alpha-D-glucosamine + holo-[ACP] + H(+). It functions in the pathway bacterial outer membrane biogenesis; LPS lipid A biosynthesis. Catalyzes the N-acylation of UDP-3-O-acylglucosamine using 3-hydroxyacyl-ACP as the acyl donor. Is involved in the biosynthesis of lipid A, a phosphorylated glycolipid that anchors the lipopolysaccharide to the outer membrane of the cell. This chain is UDP-3-O-acylglucosamine N-acyltransferase 2, found in Gloeobacter violaceus (strain ATCC 29082 / PCC 7421).